Here is a 638-residue protein sequence, read N- to C-terminus: Mediator of RNA polymerase II transcription subunit 17 (638 aa).

Positions 1–21 (MSDSFNLPLRPLTEKRERPDP) are disordered.

The protein belongs to the Mediator complex subunit 17 family. Component of the Mediator complex.

The protein resides in the nucleus. Functionally, component of the Mediator complex, a coactivator involved in the regulated transcription of nearly all RNA polymerase II-dependent genes. Mediator functions as a bridge to convey information from gene-specific regulatory proteins to the basal RNA polymerase II transcription machinery. Mediator is recruited to promoters by direct interactions with regulatory proteins and serves as a scaffold for the assembly of a functional preinitiation complex with RNA polymerase II and the general transcription factors. This chain is Mediator of RNA polymerase II transcription subunit 17 (srb4), found in Aspergillus oryzae (strain ATCC 42149 / RIB 40) (Yellow koji mold).